An 83-amino-acid polypeptide reads, in one-letter code: Short neurotoxin VAN-10 (83 aa).

The N-terminal stretch at 1 to 21 (MKTLLLTLVVVTIVCLDLGYT) is a signal peptide. Disulfide bonds link Cys24–Cys45, Cys38–Cys62, Cys64–Cys75, and Cys76–Cys81.

Belongs to the three-finger toxin family. Short-chain subfamily. Type I alpha-neurotoxin sub-subfamily. As to expression, expressed by the venom gland.

The protein localises to the secreted. Its function is as follows. Binds to muscle nicotinic acetylcholine receptor (nAChR) and inhibit acetylcholine from binding to the receptor, thereby impairing neuromuscular transmission. This Laticauda laticaudata (Blue-ringed sea krait) protein is Short neurotoxin VAN-10.